Here is a 160-residue protein sequence, read N- to C-terminus: Putative antiporter subunit mnhE2 (160 aa).

The next 3 membrane-spanning stretches (helical) occupy residues 22–42, 55–75, and 100–120; these read HFKFSTFFSGYLIGLIVIYIL, IWVAIKFLGVYLYQLITSSIS, and SDWSITFLTILIIITPGSTVI.

The protein belongs to the CPA3 antiporters (TC 2.A.63) subunit E family. In terms of assembly, may form a heterooligomeric complex that consists of seven subunits: mnhA2, mnhB2, mnhC2, mnhD2, mnhE2, mnhF2 and mnhG2.

It localises to the cell membrane. This chain is Putative antiporter subunit mnhE2 (mnhE2), found in Staphylococcus aureus (strain USA300).